The primary structure comprises 508 residues: Steroid 17-alpha-hydroxylase/17,20 lyase (508 aa).

Position 442 (C442) interacts with heme.

It belongs to the cytochrome P450 family. It depends on heme as a cofactor.

The protein resides in the endoplasmic reticulum membrane. Its subcellular location is the microsome membrane. It catalyses the reaction a C21-steroid + reduced [NADPH--hemoprotein reductase] + O2 = a 17alpha-hydroxy-C21-steroid + oxidized [NADPH--hemoprotein reductase] + H2O + H(+). The enzyme catalyses progesterone + reduced [NADPH--hemoprotein reductase] + O2 = 17alpha-hydroxyprogesterone + oxidized [NADPH--hemoprotein reductase] + H2O + H(+). It carries out the reaction pregnenolone + reduced [NADPH--hemoprotein reductase] + O2 = 17alpha-hydroxypregnenolone + oxidized [NADPH--hemoprotein reductase] + H2O + H(+). The catalysed reaction is 17alpha-hydroxyprogesterone + reduced [NADPH--hemoprotein reductase] + O2 = androst-4-ene-3,17-dione + acetate + oxidized [NADPH--hemoprotein reductase] + H2O + 2 H(+). It catalyses the reaction 17alpha-hydroxyprogesterone + reduced [NADPH--hemoprotein reductase] + O2 = 16alpha,17alpha-dihydroxyprogesterone + oxidized [NADPH--hemoprotein reductase] + H2O + H(+). The enzyme catalyses 16alpha,17alpha-dihydroxyprogesterone + reduced [NADPH--hemoprotein reductase] + O2 = 6beta,16alpha,17alpha-trihydroxyprogesterone + oxidized [NADPH--hemoprotein reductase] + H2O + H(+). It carries out the reaction 17alpha-hydroxypregnenolone + reduced [NADPH--hemoprotein reductase] + O2 = 3beta-hydroxyandrost-5-en-17-one + acetate + oxidized [NADPH--hemoprotein reductase] + H2O + 2 H(+). The catalysed reaction is 16alpha,17alpha-dihydroxypregnenolone + reduced [NADPH--hemoprotein reductase] + O2 = 3beta,16alpha-dihydroxy-androst-5-en-17-one + acetate + oxidized [NADPH--hemoprotein reductase] + H2O + 2 H(+). It catalyses the reaction 3beta-hydroxyandrost-5-en-17-one + reduced [NADPH--hemoprotein reductase] + O2 = 3beta,16alpha-dihydroxy-androst-5-en-17-one + oxidized [NADPH--hemoprotein reductase] + H2O + H(+). The enzyme catalyses androst-4-ene-3,17-dione + reduced [NADPH--hemoprotein reductase] + O2 = 16alpha-hydroxyandrost-4-ene-3,17-dione + oxidized [NADPH--hemoprotein reductase] + H2O + H(+). Its pathway is steroid hormone biosynthesis. It functions in the pathway steroid biosynthesis; glucocorticoid biosynthesis. Regulated predominantly by intracellular cAMP levels. The 17,20-lyase activity is stimulated by cytochrome b5, which acts as an allosteric effector increasing the Vmax of the lyase activity. A cytochrome P450 monooxygenase involved in corticoid and androgen biosynthesis. Catalyzes 17-alpha hydroxylation of C21 steroids, which is common for both pathways. A second oxidative step, required only for androgen synthesis, involves an acyl-carbon cleavage. The 17-alpha hydroxy intermediates, as part of adrenal glucocorticoids biosynthesis pathway, are precursors of cortisol. Hydroxylates steroid hormones, pregnenolone and progesterone to form 17-alpha hydroxy metabolites, followed by the cleavage of the C17-C20 bond to form C19 steroids, dehydroepiandrosterone (DHEA) and androstenedione. Has 16-alpha hydroxylase activity. Catalyzes 16-alpha hydroxylation of 17-alpha hydroxy pregnenolone, followed by the cleavage of the C17-C20 bond to form 16-alpha-hydroxy DHEA. Also 16-alpha hydroxylates androgens, relevant for estriol synthesis. Mechanistically, uses molecular oxygen inserting one oxygen atom into a substrate, and reducing the second into a water molecule, with two electrons provided by NADPH via cytochrome P450 reductase (CPR; NADPH-ferrihemoprotein reductase). The sequence is that of Steroid 17-alpha-hydroxylase/17,20 lyase (CYP17A1) from Equus caballus (Horse).